Here is a 688-residue protein sequence, read N- to C-terminus: SRSF protein kinase 2 (688 aa).

The tract at residues 1-65 (MSVNSEKSSS…EQEDPADYCK (65 aa)) is disordered. A compositionally biased stretch (pro residues) spans 22–43 (LVPPPPPPPPPPPPPLPDPTPP). Residues 44 to 61 (EPEEEILGSDDEEQEDPA) are compositionally biased toward acidic residues. The residue at position 52 (Ser-52) is a Phosphoserine. The region spanning 81–684 (YHVIRKLGWG…ASAGECLRHP (604 aa)) is the Protein kinase domain. ATP-binding positions include 87–95 (LGWGHFSTV) and Lys-110. Catalysis depends on Asp-214, which acts as the Proton acceptor. Disordered stretches follow at residues 239–277 (WQKA…KKQK), 329–444 (GLEE…GRHK), and 469–501 (SVLS…TGDL). Over residues 265-277 (SKNKKKKLKKKQK) the composition is skewed to basic residues. At Ser-380 the chain carries Phosphoserine. Residues 397–421 (QLDDEDDDEEDCPNPEEYNLDEPNA) are compositionally biased toward acidic residues. The span at 423–433 (SDYTYSSSYEQ) shows a compositional bias: polar residues. Ser-475 carries the post-translational modification Phosphoserine. Thr-478 carries the phosphothreonine modification. A phosphoserine mark is found at Ser-484, Ser-486, and Ser-490. A Phosphothreonine; by PKB/AKT1 modification is found at Thr-492. 2 positions are modified to phosphoserine: Ser-494 and Ser-497. Phosphoserine; by CK2 is present on Ser-588.

This sequence belongs to the protein kinase superfamily. CMGC Ser/Thr protein kinase family. As to quaternary structure, associates with U4/U6-U5 tri-small nuclear ribonucleoproteins (U4/U6-U5 tri-snRNPs). Interacts with PKB/AKT1 in a phosphorylation-dependent manner. The phosphorylated form (by PKB/AKT1) interacts with YWHAB and YWHAE. Interaction with YWHAB suppresses its cleavage by caspases and inhibits the release of its N-terminal pro-apoptotic fragment. Interacts with SFN. Interacts with ACIN1. Interacts with POLR2A/RNA polymerase II; the interaction occurs during the co-transcriptional formation of inappropriate R-loops. Requires Mg(2+) as cofactor. In terms of processing, phosphorylation at Thr-492 by PKB/AKT1 enhances its stimulatory activity in triggering cyclin-D1 (CCND1) expression and promoting apoptosis in neurons, which can be blocked by YWHAB. It also enhances its protein kinase activity toward ACIN1 and SRSF2, promotes its nuclear translocation and prevents its proteolytic cleavage. Proteolytically cleaved at Asp-139 and Asp-403 by caspase-3 during apoptotic cell death. Cleavage at Asp-139 which is the major site of cleavage, produces a small N-terminal fragment that translocates into nucleus and promotes VP16-induced apoptosis. Highly expressed in brain, moderately expressed in heart and skeletal muscle and at low levels in lung, liver, and kidney.

Its subcellular location is the cytoplasm. The protein localises to the nucleus. The protein resides in the nucleoplasm. It is found in the nucleus speckle. It localises to the chromosome. The catalysed reaction is L-seryl-[protein] + ATP = O-phospho-L-seryl-[protein] + ADP + H(+). The enzyme catalyses L-threonyl-[protein] + ATP = O-phospho-L-threonyl-[protein] + ADP + H(+). Its activity is regulated as follows. Activated by phosphorylation on Ser-52 and Ser-588. Its function is as follows. Serine/arginine-rich protein-specific kinase which specifically phosphorylates its substrates at serine residues located in regions rich in arginine/serine dipeptides, known as RS domains and is involved in the phosphorylation of SR splicing factors and the regulation of splicing. Promotes neuronal apoptosis by up-regulating cyclin-D1 (CCND1) expression. This is done by the phosphorylation of SRSF2, leading to the suppression of p53/TP53 phosphorylation thereby relieving the repressive effect of p53/TP53 on cyclin-D1 (CCND1) expression. Phosphorylates ACIN1, and redistributes it from the nuclear speckles to the nucleoplasm, resulting in cyclin A1 but not cyclin A2 up-regulation. Plays an essential role in spliceosomal B complex formation via the phosphorylation of DDX23/PRP28. Probably by phosphorylating DDX23, leads to the suppression of incorrect R-loops formed during transcription; R-loops are composed of a DNA:RNA hybrid and the associated non-template single-stranded DNA. Can mediate hepatitis B virus (HBV) core protein phosphorylation. Plays a negative role in the regulation of HBV replication through a mechanism not involving the phosphorylation of the core protein but by reducing the packaging efficiency of the pregenomic RNA (pgRNA) without affecting the formation of the viral core particles. This is SRSF protein kinase 2 from Homo sapiens (Human).